Reading from the N-terminus, the 236-residue chain is Leucyl/phenylalanyl-tRNA--protein transferase (236 aa).

This sequence belongs to the L/F-transferase family.

Its subcellular location is the cytoplasm. The enzyme catalyses N-terminal L-lysyl-[protein] + L-leucyl-tRNA(Leu) = N-terminal L-leucyl-L-lysyl-[protein] + tRNA(Leu) + H(+). The catalysed reaction is N-terminal L-arginyl-[protein] + L-leucyl-tRNA(Leu) = N-terminal L-leucyl-L-arginyl-[protein] + tRNA(Leu) + H(+). It catalyses the reaction L-phenylalanyl-tRNA(Phe) + an N-terminal L-alpha-aminoacyl-[protein] = an N-terminal L-phenylalanyl-L-alpha-aminoacyl-[protein] + tRNA(Phe). In terms of biological role, functions in the N-end rule pathway of protein degradation where it conjugates Leu, Phe and, less efficiently, Met from aminoacyl-tRNAs to the N-termini of proteins containing an N-terminal arginine or lysine. This Shewanella loihica (strain ATCC BAA-1088 / PV-4) protein is Leucyl/phenylalanyl-tRNA--protein transferase.